Consider the following 131-residue polypeptide: UPF0102 protein RPD_0400 (131 aa).

The protein belongs to the UPF0102 family.

The sequence is that of UPF0102 protein RPD_0400 from Rhodopseudomonas palustris (strain BisB5).